We begin with the raw amino-acid sequence, 210 residues long: MATNYHDITIAFAGVCQAVSLVQQFAHKGSADREIFANSIKSLLVTQPDSTLAVFDGQLANLKLGLETVQAQMGSPNGKLDTEIGRYWINVLALSQKLNKNPEAKAKLAERLQQIERQLPLYENDIMADQMIANLAAIYSDVISPLGSKIHVLGLQDYLVRPDIQQKIRASLLAGIRAGILWQQVGGTRWQFLFSRRKILNQAQQFYKSI.

Residues 103–130 (EAKAKLAERLQQIERQLPLYENDIMADQ) adopt a coiled-coil conformation.

It belongs to the HflD family.

It is found in the cytoplasm. It localises to the cell inner membrane. This chain is High frequency lysogenization protein HflD homolog, found in Actinobacillus pleuropneumoniae serotype 5b (strain L20).